The following is a 311-amino-acid chain: tRNA-cytidine(32) 2-sulfurtransferase (311 aa).

The PP-loop motif signature appears at 47-52 (SGGKDS). [4Fe-4S] cluster is bound by residues Cys122, Cys125, and Cys213.

It belongs to the TtcA family. As to quaternary structure, homodimer. Requires Mg(2+) as cofactor. The cofactor is [4Fe-4S] cluster.

The protein resides in the cytoplasm. The catalysed reaction is cytidine(32) in tRNA + S-sulfanyl-L-cysteinyl-[cysteine desulfurase] + AH2 + ATP = 2-thiocytidine(32) in tRNA + L-cysteinyl-[cysteine desulfurase] + A + AMP + diphosphate + H(+). It participates in tRNA modification. Its function is as follows. Catalyzes the ATP-dependent 2-thiolation of cytidine in position 32 of tRNA, to form 2-thiocytidine (s(2)C32). The sulfur atoms are provided by the cysteine/cysteine desulfurase (IscS) system. This chain is tRNA-cytidine(32) 2-sulfurtransferase, found in Shigella dysenteriae serotype 1 (strain Sd197).